The primary structure comprises 286 residues: Polyamine aminopropyltransferase (286 aa).

In terms of domain architecture, PABS spans 5-238; that stretch reads KTWHEKLYCH…GVMVFAWGTN (234 aa). 2 residues coordinate spermidine: histidine 64 and aspartate 88. Residues glutamate 108 and 140 to 141 contribute to the S-methyl-5'-thioadenosine site; that span reads DG. The Proton acceptor role is filled by aspartate 158. 158 to 161 contacts spermidine; the sequence is DSTD.

The protein belongs to the spermidine/spermine synthase family. As to quaternary structure, homodimer or homotetramer.

The protein resides in the cytoplasm. It catalyses the reaction S-adenosyl 3-(methylsulfanyl)propylamine + putrescine = S-methyl-5'-thioadenosine + spermidine + H(+). It participates in amine and polyamine biosynthesis; spermidine biosynthesis; spermidine from putrescine: step 1/1. Its function is as follows. Catalyzes the irreversible transfer of a propylamine group from the amino donor S-adenosylmethioninamine (decarboxy-AdoMet) to putrescine (1,4-diaminobutane) to yield spermidine. This Buchnera aphidicola subsp. Acyrthosiphon pisum (strain 5A) protein is Polyamine aminopropyltransferase.